A 70-amino-acid polypeptide reads, in one-letter code: U2-agatoxin-Ao1l (70 aa).

An N-terminal signal peptide occupies residues 1–20; it reads MRAIISLLLISAMVFSIIEA. The propeptide occupies 21-34; that stretch reads VPEEEGLQLSEDER. 3 disulfides stabilise this stretch: Cys37-Cys53, Cys44-Cys58, and Cys52-Cys68. At Leu69 the chain carries Leucine amide.

It belongs to the neurotoxin 01 (U2-agtx) family. In terms of tissue distribution, expressed by the venom gland.

The protein resides in the secreted. Insect active toxin causing rapid but reversible paralysis in crickets. No activity shown in mammals. Does not show effect on mammalian voltage-gated calcium channels. The protein is U2-agatoxin-Ao1l of Agelena orientalis (Funnel-web spider).